The following is a 422-amino-acid chain: Ena/VASP-like protein (422 aa).

The WH1 domain maps to 4–118 (FEEFSEQSIC…NAMLFALNIM (115 aa)). The span at 120–135 (SQEGGPSSQRQVQNGP) shows a compositional bias: polar residues. Disordered stretches follow at residues 120-139 (SQEGGPSSQRQVQNGPSPDE) and 147-375 (VMEQ…PAGS). A Phosphoserine modification is found at serine 136. The segment covering 147 to 163 (VMEQHQQQRQESLERRT) has biased composition (basic and acidic residues). The span at 175–186 (PSSAASAPVSCS) shows a compositional bias: low complexity. Pro residues predominate over residues 187 to 212 (GPPPPPPPPVPPPPTGATPPPPPPLP). The segment at 228–248 (GLAAAIAGAKLRRVQRPEDAS) is EVH2 block A. The EVH2 stretch occupies residues 228-419 (GLAAAIAGAK…DAIRQELSGI (192 aa)). The short motif at 237 to 240 (KLRR) is the KLKR element. The span at 248-259 (SGGSSPSGTSKS) shows a compositional bias: low complexity. A phosphoserine mark is found at serine 252 and serine 265. Residues 271 to 288 (GGLMEEMNKLLAKRRKAA) form an EVH2 block B region. Over residues 305–326 (EDPSTSPSPGTRAASQPPNSSE) the composition is skewed to polar residues. Phosphoserine occurs at positions 310, 312, 335, 337, 347, 355, 360, and 375. Positions 327–337 (AGRKPWERSNS) are enriched in basic and acidic residues. The segment at 348-368 (RTPSVAKSPEAKSPLQSQPHS) is required for interaction with ZDHHC17. An EVH2 block C region spans residues 385–419 (DLDRMKQEILEEVVRELHKVKDEIIDAIRQELSGI). Residues 388-414 (RMKQEILEEVVRELHKVKDEIIDAIRQ) adopt a coiled-coil conformation.

It belongs to the Ena/VASP family. In terms of assembly, homotetramer. Binds to the SH3 domains of ABL1, LYN and SRC. Also binds to profilin, with preference for isoform IIa of PFN2, and the WW domain of APBB1/FE65. Binds to SEMA6A. Interacts, via the Pro-rich region, with the C-terminal SH3 domain of DNMBP. Interacts with RAPH1. Binds, via the EVH1 domain, the Pro-rich domain of Listeria monocytogenes actA. Binds, via the EVH1 domain, the Pro-rich domain of ZYX. Interacts with FYB1. Interacts with ZDHHC17. Phosphorylated by PKA; phosphorylation abolishes binding to SH3 domains of ABL and SRC.

It localises to the cytoplasm. The protein localises to the cytoskeleton. The protein resides in the stress fiber. Its subcellular location is the cell projection. It is found in the lamellipodium. Its function is as follows. Ena/VASP proteins are actin-associated proteins involved in a range of processes dependent on cytoskeleton remodeling and cell polarity such as axon guidance and lamellipodial and filopodial dynamics in migrating cells. EVL enhances actin nucleation and polymerization. The polypeptide is Ena/VASP-like protein (EVL) (Pongo abelii (Sumatran orangutan)).